The sequence spans 262 residues: 3-methyl-2-oxobutanoate hydroxymethyltransferase (262 aa).

The Mg(2+) site is built by Asp-44 and Asp-83. Residues 44 to 45 (DS), Asp-83, and Lys-113 contribute to the 3-methyl-2-oxobutanoate site. Glu-115 lines the Mg(2+) pocket. The Proton acceptor role is filled by Glu-182.

It belongs to the PanB family. Homodecamer; pentamer of dimers. Mg(2+) is required as a cofactor.

Its subcellular location is the cytoplasm. The catalysed reaction is 3-methyl-2-oxobutanoate + (6R)-5,10-methylene-5,6,7,8-tetrahydrofolate + H2O = 2-dehydropantoate + (6S)-5,6,7,8-tetrahydrofolate. The protein operates within cofactor biosynthesis; (R)-pantothenate biosynthesis; (R)-pantoate from 3-methyl-2-oxobutanoate: step 1/2. Its function is as follows. Catalyzes the reversible reaction in which hydroxymethyl group from 5,10-methylenetetrahydrofolate is transferred onto alpha-ketoisovalerate to form ketopantoate. The chain is 3-methyl-2-oxobutanoate hydroxymethyltransferase from Picosynechococcus sp. (strain ATCC 27264 / PCC 7002 / PR-6) (Agmenellum quadruplicatum).